The chain runs to 304 residues: Non-specific ribonucleoside hydrolase RihC (304 aa).

His-233 is a catalytic residue.

The protein belongs to the IUNH family. RihC subfamily.

Functionally, hydrolyzes both purine and pyrimidine ribonucleosides with a broad-substrate specificity. The sequence is that of Non-specific ribonucleoside hydrolase RihC from Escherichia coli O139:H28 (strain E24377A / ETEC).